Reading from the N-terminus, the 816-residue chain is Metabotropic glutamate receptor-like protein E (816 aa).

A signal peptide spans 1 to 27; that stretch reads MKIKIGNILKNVVILVIFSLFISKINS. Over 28-436 the chain is Extracellular; sequence EVVKPNPAKP…QVVVFDRTLN (409 aa). N-linked (GlcNAc...) asparagine glycans are attached at residues Asn-68, Asn-311, and Asn-388. Residues 437 to 457 traverse the membrane as a helical segment; that stretch reads IVLGVITGVCVLIVIGIGSVI. The Cytoplasmic portion of the chain corresponds to 458-469; sequence ALQWRKFRYSSP. A helical membrane pass occupies residues 470–490; sequence LFCMFIIIGALMGLASVFTLL. At 491–496 the chain is on the extracellular side; the sequence is PTPTTP. Residues 497–517 form a helical membrane-spanning segment; that stretch reads LCSGFPWLLGLGYVIVFGTLF. Over 518-541 the chain is Cytoplasmic; it reads TKTWRTWRLFSNARKFKIIRITNK. The chain crosses the membrane as a helical span at residues 542–562; the sequence is FIITLVGGFVLLESIFMIIWT. Topologically, residues 563–590 are extracellular; sequence AVDRPIPLAEPIFKAGEAQLQCTSDSEA. A helical transmembrane segment spans residues 591–611; that stretch reads WWYVFVFYKVFYILFGVFLAF. Topologically, residues 612–625 are cytoplasmic; sequence KTRNVVDSLNESKP. A helical transmembrane segment spans residues 626 to 646; the sequence is ITLALYNLTFVMVVAIALGFI. Over 647-653 the chain is Extracellular; the sequence is LRDNPIA. A helical membrane pass occupies residues 654–674; it reads IIVIQTIAILLGFTVTVSVLF. Topologically, residues 675–816 are cytoplasmic; it reads LPKVWMILSG…KKKKKKNNNK (142 aa). The segment at 697–718 is disordered; sequence DSMGRSNGNTTEAESTRGYTNK.

The protein belongs to the G-protein coupled receptor 3 family.

It localises to the membrane. Its function is as follows. May be involved in early development in cAMP sensing and subsequent chemotactic response. Probable receptor of GABA and glutamate, leading respectively to the induction or inhibition of SDF-2 formation. In Dictyostelium discoideum (Social amoeba), this protein is Metabotropic glutamate receptor-like protein E (grlE).